We begin with the raw amino-acid sequence, 611 residues long: Mitochondrial distribution and morphology protein 34 (611 aa).

The SMP-LTD domain maps to 1-195 (MAFNFNWSPL…LPAIIHRLSL (195 aa)). Over residues 325 to 342 (SAPLSSQDTASVASSQSR) the composition is skewed to polar residues. Disordered regions lie at residues 325–347 (SAPLSSQDTASVASSQSRPGLPS), 361–402 (RHSK…STIT), 415–544 (SIIP…PTYT), and 587–611 (SYVGSGSGSGGFWDRSHTPPPAYRH). The span at 361-373 (RHSKAHARKRKKR) shows a compositional bias: basic residues. Composition is skewed to basic and acidic residues over residues 374–385 (VIDLRPHRKPTD) and 444–459 (TLRDRIVDRDDAERTN). Pro residues predominate over residues 520–529 (PLGPPAPAPI).

Belongs to the MDM34 family. As to quaternary structure, component of the ER-mitochondria encounter structure (ERMES) or MDM complex, composed of MMM1, MDM10, MDM12 and MDM34.

Its subcellular location is the mitochondrion outer membrane. Its function is as follows. Component of the ERMES/MDM complex, which serves as a molecular tether to connect the endoplasmic reticulum (ER) and mitochondria. Components of this complex are involved in the control of mitochondrial shape and protein biogenesis, and function in nonvesicular lipid trafficking between the ER and mitochondria. MDM34 is required for the interaction of the ER-resident membrane protein MMM1 and the outer mitochondrial membrane-resident beta-barrel protein MDM10. The protein is Mitochondrial distribution and morphology protein 34 of Paracoccidioides brasiliensis (strain Pb18).